Reading from the N-terminus, the 442-residue chain is ATP-dependent protease ATPase subunit HslU (442 aa).

Residues Ile18, Gly60 to Glu65, Asp255, Glu320, and Arg392 contribute to the ATP site.

The protein belongs to the ClpX chaperone family. HslU subfamily. As to quaternary structure, a double ring-shaped homohexamer of HslV is capped on each side by a ring-shaped HslU homohexamer. The assembly of the HslU/HslV complex is dependent on binding of ATP.

Its subcellular location is the cytoplasm. Its function is as follows. ATPase subunit of a proteasome-like degradation complex; this subunit has chaperone activity. The binding of ATP and its subsequent hydrolysis by HslU are essential for unfolding of protein substrates subsequently hydrolyzed by HslV. HslU recognizes the N-terminal part of its protein substrates and unfolds these before they are guided to HslV for hydrolysis. The chain is ATP-dependent protease ATPase subunit HslU from Shewanella sp. (strain W3-18-1).